The sequence spans 128 residues: Large ribosomal subunit protein bL20c (128 aa).

It belongs to the bacterial ribosomal protein bL20 family.

It is found in the plastid. The protein localises to the chloroplast. In terms of biological role, binds directly to 23S ribosomal RNA and is necessary for the in vitro assembly process of the 50S ribosomal subunit. It is not involved in the protein synthesizing functions of that subunit. The protein is Large ribosomal subunit protein bL20c of Daucus carota (Wild carrot).